The sequence spans 154 residues: Large-conductance mechanosensitive channel (154 aa).

Helical transmembrane passes span 14–34 (VMDL…VTSL), 38–58 (IITP…LFIN), and 81–101 (GLFL…FIVI).

It belongs to the MscL family. In terms of assembly, homopentamer.

Its subcellular location is the cell membrane. Functionally, channel that opens in response to stretch forces in the membrane lipid bilayer. May participate in the regulation of osmotic pressure changes within the cell. This is Large-conductance mechanosensitive channel from Brevibacillus brevis (strain 47 / JCM 6285 / NBRC 100599).